The following is a 1036-amino-acid chain: ADAMTS-like protein 4 (1036 aa).

An N-terminal signal peptide occupies residues 1–24; sequence MESWLGRLWLCMMLLLPLPQPCQD. The region spanning 47–91 is the TSP type-1 1 domain; sequence GPWGRWASCSQPCGVGVQRRSRTCELHPALPLPPRPPRHPEAHRP. Disordered stretches follow at residues 73–149 and 163–308; these read HPAL…IKPG and HRSR…WLPL. Residues 163–173 show a composition bias toward basic residues; it reads HRSRRHPHRPG. Residues 215-253 are compositionally biased toward polar residues; the sequence is TPRSGTAQTEVLPRTSSAPSYTGTPAPTSSFGDSRSFQG. 2 N-linked (GlcNAc...) asparagine glycosylation sites follow: Asn-454 and Asn-737. TSP type-1 domains follow at residues 687-748, 750-804, 805-871, 872-931, and 932-988; these read CPPY…HLCG, WEIS…DMGP, CTTA…GPCE, RTWR…QGQA, and CEDK…QPCN. The PLAC domain occupies 991–1028; it reads PDDQCKDSSPHCPLVVQARLCVYPYYTTTCCRSCAHVL.

Interacts with CTSB. Interacts with FBN1. Post-translationally, glycosylated. Can be O-fucosylated by POFUT2 on a serine or a threonine residue found within the consensus sequence C1-X(2)-(S/T)-C2-G of the TSP type-1 repeat domains where C1 and C2 are the first and second cysteine residue of the repeat, respectively. Fucosylated repeats can then be further glycosylated by the addition of a beta-1,3-glucose residue by the glucosyltransferase, B3GALTL. Fucosylation mediates the efficient secretion of ADAMTS family members. Can also be C-glycosylated with one or two mannose molecules on tryptophan residues within the consensus sequence W-X-X-W of the TPRs, and N-glycosylated. These other glycosylations can also facilitate secretion. In terms of tissue distribution, widely expressed in a range of tissues. Especially prevalent in brain, spinal cord, muscle, lung and heart.

The protein localises to the secreted. The protein resides in the extracellular space. Its subcellular location is the extracellular matrix. Positive regulation of apoptosis. May facilitate FBN1 microfibril biogenesis. The sequence is that of ADAMTS-like protein 4 from Mus musculus (Mouse).